The chain runs to 461 residues: Ornithine decarboxylase (461 aa).

Lys69 carries the N6-(pyridoxal phosphate)lysine modification. Residues Ser200, Gly237, and 274-277 each bind pyridoxal 5'-phosphate; that span reads EPGR. Ser303 bears the Phosphoserine; by CK2 mark. Substrate is bound at residue 331 to 332; the sequence is YD. Catalysis depends on Cys360, which acts as the Proton donor; shared with dimeric partner. S-nitrosocysteine is present on Cys360. Asp361 provides a ligand contact to substrate. A pyridoxal 5'-phosphate-binding site is contributed by Tyr389.

Belongs to the Orn/Lys/Arg decarboxylase class-II family. Homodimer. Only the dimer is catalytically active, as the active sites are constructed of residues from both monomers. Pyridoxal 5'-phosphate serves as cofactor.

The catalysed reaction is L-ornithine + H(+) = putrescine + CO2. Its pathway is amine and polyamine biosynthesis; putrescine biosynthesis via L-ornithine pathway; putrescine from L-ornithine: step 1/1. Inhibited by antizymes (AZs) OAZ1, OAZ2 and OAZ3 in response to polyamine levels. AZs inhibit the assembly of the functional homodimer by binding to ODC monomers. Additionally, OAZ1 targets ODC monomers for ubiquitin-independent proteolytic destruction by the 26S proteasome. Catalyzes the first and rate-limiting step of polyamine biosynthesis that converts ornithine into putrescine, which is the precursor for the polyamines, spermidine and spermine. Polyamines are essential for cell proliferation and are implicated in cellular processes, ranging from DNA replication to apoptosis. The chain is Ornithine decarboxylase (Odc1) from Rattus norvegicus (Rat).